A 191-amino-acid chain; its full sequence is NAD(P)H dehydrogenase (quinone) (191 aa).

Residues 4–184 (ILVIFHSITG…VAKMLGKRVA (181 aa)) form the Flavodoxin-like domain. Residues 10–15 (SITGNT), 83–85 (TRF), and 118–124 (SNEMPHG) each bind FMN.

It belongs to the WrbA family. As to quaternary structure, homodimer and homotetramer; in equilibrium. FMN is required as a cofactor.

It catalyses the reaction a quinone + NADH + H(+) = a quinol + NAD(+). It carries out the reaction a quinone + NADPH + H(+) = a quinol + NADP(+). Its function is as follows. It seems to function in response to environmental stress when various electron transfer chains are affected or when the environment is highly oxidizing. It reduces quinones to the hydroquinone state to prevent interaction of the semiquinone with O2 and production of superoxide. It prefers NADH over NADPH. The chain is NAD(P)H dehydrogenase (quinone) from Archaeoglobus fulgidus (strain ATCC 49558 / DSM 4304 / JCM 9628 / NBRC 100126 / VC-16).